Reading from the N-terminus, the 169-residue chain is Orotate phosphoribosyltransferase (169 aa).

Residues Arg86, Lys90, His92, and 111 to 119 (EDVTTSGGS) contribute to the 5-phospho-alpha-D-ribose 1-diphosphate site. Orotate is bound by residues Thr115 and Arg143.

Belongs to the purine/pyrimidine phosphoribosyltransferase family. PyrE subfamily. Homodimer. Mg(2+) serves as cofactor.

It catalyses the reaction orotidine 5'-phosphate + diphosphate = orotate + 5-phospho-alpha-D-ribose 1-diphosphate. It participates in pyrimidine metabolism; UMP biosynthesis via de novo pathway; UMP from orotate: step 1/2. Catalyzes the transfer of a ribosyl phosphate group from 5-phosphoribose 1-diphosphate to orotate, leading to the formation of orotidine monophosphate (OMP). The protein is Orotate phosphoribosyltransferase of Methanocorpusculum labreanum (strain ATCC 43576 / DSM 4855 / Z).